Reading from the N-terminus, the 290-residue chain is Short chain dehydrogenase/reductase nsrO (290 aa).

NADP(+) is bound by residues I37 and K149. Catalysis depends on proton donor residues S168 and Y182. NADP(+)-binding residues include Y182, K186, and T221. K186 acts as the Lowers pKa of active site Tyr in catalysis.

This sequence belongs to the short-chain dehydrogenases/reductases (SDR) family.

It functions in the pathway secondary metabolite biosynthesis. Its function is as follows. Short chain dehydrogenase/reductase; part of the gene cluster that mediates the biosynthesis of the tetrahydroxanthone dimer neosartorin, which exhibits antibacterial activity. The two different monomeric units appear to be synthesized by the same set of enzymes, among which the Baeyer-Villiger monooxygenase nsrF is the key enzyme for the divergence of the biosynthetic routes. The pathway begins with the synthesis of atrochrysone thioester by the polyketide synthase nsrB. The atrochrysone carboxyl ACP thioesterase nsrC then breaks the thioester bond and releases the atrochrysone carboxylic acid from AacuL. Atrochrysone carboxylic acid is decarboxylated by the decarboxylase nsrE, and oxidized by the anthrone oxygenase nsrD to yield emodin. Emodin is then reduced to emodin hydroquinone by the oxidoreductase nsrR. A-ring reduction by the short chain dehydrogenase nsrJ, dehydration by the scytalone dehydratase-like protein nsrI and probable spontaneous re-oxidation, results in overall deoxygenation to chrysophanol. The Baeyer-Villiger monooxygenase nsrF accepts chrysophanol as a substrate to insert one oxygen atom at two different positions to yield the precursors of both monomric units. NsrF is promiscuous/flexible in interacting with the 2 (non methylated and methylated) aromatic rings of chrysophanol, thus diverging the biosynthetic pathway at this point. After the hydrolysis of the lactones, methylesterification by the methyltransferase nsrG yields respectively moniliphenone and 2,2',6'-trihydroxy-4-methyl-6-methoxya-cyldiphenylmethanone. The next steps are the hydroxylation by the FAD-dependent monooxygenase nsrK, followed by isomerization by the monooxygenase nsrQ. The short chain dehydrogenase/reductase nsrO then catalyzes the C-5 ketoreduction to give the xanthone skeleton of blennolide C and 5-acetylblennolide A. The acetyltransferase nsrL has a strict substrate specificity and uses only blennolide A but not blennolide C to yield 5-acetylblennolide A as the single-acetylated product. In the final step of the biosynthesis, the heterodimerization of the 2 xanthones, blennolide C and 5-acetylblennolide A, is catalyzed by the cytochrome P450 monooxygenase nsrP. NsrP can utilize at least three different xanthones as its substrates to perform the dimerization reaction. This chain is Short chain dehydrogenase/reductase nsrO, found in Aspergillus novofumigatus (strain IBT 16806).